We begin with the raw amino-acid sequence, 571 residues long: MDSRTVGILGGGQLGRMIVEAANRLNIKTVILDAENSPAKQISNSNDHVNGSFSNPLDIEKLAEKCDVLTIEIEHVDVPTLKNLQVKHPKLKIYPSPETIRLIQDKYIQKEHLIKNGIAVTQSVPVEQASETSLLNVGRDLGFPFVLKSRTLAYDGRGNFVVKNKEMIPEALEVLKDRPLYAEKWAPFTKELAVMIVRSVNGLVFSYPIVETIHKDNICDLCYAPARVPDSVQLKAKLLAENAIKSFPGCGIFGVEMFYLETGELLINEIAPRPHNSGHYTIDACVTSQFEAHLRSILDLPMPKNFTSFSTITTNAIMLNVLGDKHTKDKELETCERALATPGSSVYLYGKESRPNRKVGHINIIASSMAECEQRLNYITGRTDIPIKISVAQKLDLEAMVKPLVGIIMGSDSDLPVMSAACAVLKDFGVPFEVTIVSAHRTPHRMSAYAISASKRGIKTIIAGAGGAAHLPGMVAAMTPLPVIGVPVKGSCLDGVDSLHSIVQMPRGVPVATVAINNSTNAALLAVRLLGAYDSSYTTKMEQFLLKQEEEVLVKAQKLETVGYEAYLENK.

Phosphoserine is present on S37. The ATP-grasp domain maps to 110-298 (KEHLIKNGIA…QFEAHLRSIL (189 aa)). 138–193 (GRDLGFPFVLKSRTLAYDGRGNFVVKNKEMIPEALEVLKDRPLYAEKWAPFTKELA) provides a ligand contact to ATP.

This sequence in the C-terminal section; belongs to the AIR carboxylase family. Class I subfamily.

The enzyme catalyses 5-amino-1-(5-phospho-D-ribosyl)imidazole-4-carboxylate + H(+) = 5-amino-1-(5-phospho-beta-D-ribosyl)imidazole + CO2. The protein operates within purine metabolism; IMP biosynthesis via de novo pathway; 5-amino-1-(5-phospho-D-ribosyl)imidazole-4-carboxylate from 5-amino-1-(5-phospho-D-ribosyl)imidazole (carboxylase route): step 1/1. This is Phosphoribosylaminoimidazole carboxylase (ADE2) from Saccharomyces cerevisiae (strain ATCC 204508 / S288c) (Baker's yeast).